Here is a 498-residue protein sequence, read N- to C-terminus: Peptidase inhibitor 16 (498 aa).

Residues 1-29 (MHGSCSPWVMLPPPLLLLLLLIATGPTTA) form the signal peptide. Positions 39–167 (VDLHNQYRAQ…ANIHLLVCNY (129 aa)) constitute an SCP domain. Asn116 carries an N-linked (GlcNAc...) asparagine glycan. 3 disordered regions span residues 204–277 (NPEK…GPSS), 317–407 (PKSM…SPLS), and 419–467 (ERGG…ENPE). Polar residues-rich tracts occupy residues 218–277 (VPST…GPSS) and 344–353 (LTESGESVPQ). Residues 367–380 (PEAILPEAEAAPTE) show a composition bias toward low complexity. Basic and acidic residues predominate over residues 383 to 397 (VELREPEAESPKAES). Over residues 437 to 447 (SLPTFPSASGN) the composition is skewed to polar residues. Asn447 is a glycosylation site (N-linked (GlcNAc...) asparagine).

This sequence belongs to the CRISP family. As to quaternary structure, interacts with PSP94/MSMB. Post-translationally, N-glycosylated. As to expression, expressed strongly in aorta and skin, and weakly in adipose tissue (at protein level). In heart, found in the extracellular space surrounding cardiomyocytes (at protein level).

The protein localises to the secreted. Its function is as follows. May inhibit cardiomyocyte growth. This chain is Peptidase inhibitor 16 (Pi16), found in Mus musculus (Mouse).